We begin with the raw amino-acid sequence, 326 residues long: Transcription factor bHLH143 (326 aa).

The span at Ser175–Val189 shows a compositional bias: acidic residues. 2 disordered regions span residues Ser175–His194 and Arg234–Arg275. The segment covering Pro255–Asp271 has biased composition (polar residues). One can recognise a bHLH domain in the interval Gln263–Leu312.

As to quaternary structure, homodimer.

The protein localises to the nucleus. The polypeptide is Transcription factor bHLH143 (BHLH143) (Arabidopsis thaliana (Mouse-ear cress)).